The primary structure comprises 179 residues: ATP-dependent protease subunit HslV (179 aa).

The active site involves threonine 8. 3 residues coordinate Na(+): glycine 163, cysteine 166, and threonine 169.

The protein belongs to the peptidase T1B family. HslV subfamily. As to quaternary structure, a double ring-shaped homohexamer of HslV is capped on each side by a ring-shaped HslU homohexamer. The assembly of the HslU/HslV complex is dependent on binding of ATP.

It is found in the cytoplasm. The enzyme catalyses ATP-dependent cleavage of peptide bonds with broad specificity.. Its activity is regulated as follows. Allosterically activated by HslU binding. Its function is as follows. Protease subunit of a proteasome-like degradation complex believed to be a general protein degrading machinery. This chain is ATP-dependent protease subunit HslV, found in Solibacter usitatus (strain Ellin6076).